The following is a 186-amino-acid chain: Protein GrpE (186 aa).

The span at 1 to 15 (MADEQQTLDQQTPEQ) shows a compositional bias: polar residues. The segment at 1–20 (MADEQQTLDQQTPEQPTGAA) is disordered.

The protein belongs to the GrpE family. In terms of assembly, homodimer.

It localises to the cytoplasm. In terms of biological role, participates actively in the response to hyperosmotic and heat shock by preventing the aggregation of stress-denatured proteins, in association with DnaK and GrpE. It is the nucleotide exchange factor for DnaK and may function as a thermosensor. Unfolded proteins bind initially to DnaJ; upon interaction with the DnaJ-bound protein, DnaK hydrolyzes its bound ATP, resulting in the formation of a stable complex. GrpE releases ADP from DnaK; ATP binding to DnaK triggers the release of the substrate protein, thus completing the reaction cycle. Several rounds of ATP-dependent interactions between DnaJ, DnaK and GrpE are required for fully efficient folding. The chain is Protein GrpE from Pseudomonas aeruginosa (strain UCBPP-PA14).